Reading from the N-terminus, the 249-residue chain is MLKKIKISLILALGLTSLQAFGQENPDVKIEKLKDNLYVYTTYNTFNGTKYAANAVYLVTDKGVVVIDCPWGEDKFKSFTDEIYKKHGKKVIINIATHSHDDRAGGLEYFGKIGAKTYSTKMTDSILAKENKPRAQYTFDNNKSFKVGKSEFQVYYPGKGHTADNVVVWFPKEKVLVGGCIIKSADSKDLGYIGEAYVNDWTQSVHNIQQKFSGAQYVVAGHDDWKDQTSIQHTLDLISEYQQKQKASN.

Residues 1 to 22 (MLKKIKISLILALGLTSLQAFG) form the signal peptide. H98, H100, D102, H161, and C180 together coordinate Zn(2+). K183 is a substrate binding site. H222 is a binding site for Zn(2+).

It belongs to the metallo-beta-lactamase superfamily. Class-B beta-lactamase family. Monomer. It depends on Zn(2+) as a cofactor.

Its subcellular location is the periplasm. It catalyses the reaction a beta-lactam + H2O = a substituted beta-amino acid. Its function is as follows. Confers resistance to the different beta-lactams antibiotics (penicillin, cephalosporin and carbapenem) via the hydrolysis of the beta-lactam ring. This is Metallo-beta-lactamase type 2 (blaB3) from Elizabethkingia meningoseptica (Chryseobacterium meningosepticum).